We begin with the raw amino-acid sequence, 226 residues long: Phosphoglycolate phosphatase (226 aa).

Aspartate 9 (nucleophile) is an active-site residue. Positions 9 and 11 each coordinate Mg(2+). Lysine 150 serves as a coordination point for substrate. Residues aspartate 173 and aspartate 177 each contribute to the Mg(2+) site.

The protein belongs to the archaeal SPP-like hydrolase family. Mg(2+) serves as cofactor.

It carries out the reaction 2-phosphoglycolate + H2O = glycolate + phosphate. Catalyzes the dephosphorylation of 2-phosphoglycolate. This chain is Phosphoglycolate phosphatase, found in Methanosarcina acetivorans (strain ATCC 35395 / DSM 2834 / JCM 12185 / C2A).